Consider the following 55-residue polypeptide: Large ribosomal subunit protein bL33 (55 aa).

Belongs to the bacterial ribosomal protein bL33 family.

This chain is Large ribosomal subunit protein bL33, found in Yersinia pestis (strain Pestoides F).